A 309-amino-acid chain; its full sequence is uncharacterized protein (309 aa).

A compositionally biased stretch (basic residues) spans 1 to 16 (MAGNSRRRGAVRKAGT). The tract at residues 1 to 70 (MAGNSRRRGA…AKRTEETETV (70 aa)) is disordered. Residues glycine 261, isoleucine 281, and leucine 290 each contribute to the S-adenosyl-L-methionine site.

This sequence belongs to the class IV-like SAM-binding methyltransferase superfamily. RNA methyltransferase TrmH family.

This is an uncharacterized protein from Mycobacterium avium (strain 104).